Consider the following 104-residue polypeptide: Small ribosomal subunit protein uS10 (104 aa).

The protein belongs to the universal ribosomal protein uS10 family. In terms of assembly, part of the 30S ribosomal subunit.

In terms of biological role, involved in the binding of tRNA to the ribosomes. This is Small ribosomal subunit protein uS10 from Helicobacter pylori (strain J99 / ATCC 700824) (Campylobacter pylori J99).